The following is a 360-amino-acid chain: Phospho-N-acetylmuramoyl-pentapeptide-transferase (360 aa).

The next 10 helical transmembrane spans lie at G27–L47, G70–W90, V98–L118, L134–A154, T168–G188, G199–V219, L239–P259, I263–A283, I288–V308, and Q337–L357.

The protein belongs to the glycosyltransferase 4 family. MraY subfamily. Mg(2+) serves as cofactor.

It is found in the cell inner membrane. The catalysed reaction is UDP-N-acetyl-alpha-D-muramoyl-L-alanyl-gamma-D-glutamyl-meso-2,6-diaminopimeloyl-D-alanyl-D-alanine + di-trans,octa-cis-undecaprenyl phosphate = di-trans,octa-cis-undecaprenyl diphospho-N-acetyl-alpha-D-muramoyl-L-alanyl-D-glutamyl-meso-2,6-diaminopimeloyl-D-alanyl-D-alanine + UMP. Its pathway is cell wall biogenesis; peptidoglycan biosynthesis. In terms of biological role, catalyzes the initial step of the lipid cycle reactions in the biosynthesis of the cell wall peptidoglycan: transfers peptidoglycan precursor phospho-MurNAc-pentapeptide from UDP-MurNAc-pentapeptide onto the lipid carrier undecaprenyl phosphate, yielding undecaprenyl-pyrophosphoryl-MurNAc-pentapeptide, known as lipid I. The chain is Phospho-N-acetylmuramoyl-pentapeptide-transferase from Methylorubrum extorquens (strain CM4 / NCIMB 13688) (Methylobacterium extorquens).